The chain runs to 845 residues: Receptor-like protein Cf-9 homolog (845 aa).

Positions Met1 to Phe19 are cleaved as a signal peptide. Residues Lys20 to Gln70 are N-cap. Topologically, residues Lys20 to Gln794 are extracellular. Residues Asn28, Asn51, and Asn88 are each glycosylated (N-linked (GlcNAc...) asparagine). One copy of the LRR 1; degenerate repeat lies at Val71–Leu94. 25 LRR repeats span residues Ser95 to Glu118, Phe119 to Leu143, Ser144 to Leu171, Thr172 to Ser193, Ser194 to Leu217, Asp219 to Ser242, Ala244 to His266, Leu267 to Leu291, Thr292 to Lys316, Lys318 to Arg338, Trp340 to Leu364, Gln365 to Leu388, Ser390 to Ser410, Lys411 to Gln434, Ser436 to Leu458, Lys459 to Arg482, Glu484 to Ile506, Gly507 to Cys531, Lys532 to Tyr554, Leu555 to Asn579, Phe581 to Asn605, Leu649 to Asp672, Leu673 to Asn696, Ser698 to Leu721, and Phe723 to Gly741. Residues Asn131, Asn170, Asn183, and Asn191 are each glycosylated (N-linked (GlcNAc...) asparagine). Asn241 carries N-linked (GlcNAc...) asparagine glycosylation. N-linked (GlcNAc...) asparagine glycosylation is found at Asn279 and Asn290. Asn337, Asn360, Asn378, and Asn398 each carry an N-linked (GlcNAc...) asparagine glycan. N-linked (GlcNAc...) asparagine glycosylation is present at Asn446. Residue Asn501 is glycosylated (N-linked (GlcNAc...) asparagine). Asn545 is a glycosylation site (N-linked (GlcNAc...) asparagine). 3 N-linked (GlcNAc...) asparagine glycosylation sites follow: Asn656, Asn680, and Asn696. 2 N-linked (GlcNAc...) asparagine glycosylation sites follow: Asn728 and Asn749. Positions Lys742 to Gln794 are C-cap/acidic domain. The chain crosses the membrane as a helical span at residues Gly795–Trp815. Topologically, residues Ser816–Tyr845 are cytoplasmic.

Belongs to the RLP family.

The protein resides in the cell membrane. In terms of biological role, at the opposite of its homolog Cf-9 found in S.pimpinellifolium, was not able to confer resistance to the fungal pathogen C.fulvum. This is Receptor-like protein Cf-9 homolog from Solanum lycopersicum (Tomato).